The sequence spans 338 residues: Tagatose 1,6-diphosphate aldolase (338 aa).

The protein belongs to the aldolase LacD family.

The catalysed reaction is D-tagatofuranose 1,6-bisphosphate = D-glyceraldehyde 3-phosphate + dihydroxyacetone phosphate. It functions in the pathway carbohydrate metabolism; D-tagatose 6-phosphate degradation; D-glyceraldehyde 3-phosphate and glycerone phosphate from D-tagatose 6-phosphate: step 2/2. This chain is Tagatose 1,6-diphosphate aldolase, found in Listeria monocytogenes serotype 4a (strain HCC23).